Reading from the N-terminus, the 346-residue chain is Glucose-6-phosphatase 3 (346 aa).

Over 1–24 the chain is Lumenal; sequence MESTLGAGIAMAEALQNQLPWLEN. Residues 25 to 45 form a helical membrane-spanning segment; the sequence is VWLWVTFLGDPKSLFLFYFPA. The Cytoplasmic portion of the chain corresponds to 46–54; sequence AYYASRRVG. Residues 55 to 75 traverse the membrane as a helical segment; it reads IAVLWISLITEWLNLVFKWFL. Topologically, residues 76–108 are lumenal; the sequence is FGDRPFWWVHESGYYSQAPAQVHQFPSSCETGP. Arg79 provides a ligand contact to substrate. Residues 109–129 form a helical membrane-spanning segment; that stretch reads GSPSGHCMITGAALWPIMTAV. Residue His114 is the Proton donor of the active site. Over 130-140 the chain is Cytoplasmic; the sequence is SSQMATRAHSR. A helical membrane pass occupies residues 141-162; it reads WVRVIPSLAYCTFLLAVGLSRV. Arg161 is a substrate binding site. Residues 163–167 lie on the Lumenal side of the membrane; the sequence is FLLAH. His167 serves as the catalytic Nucleophile. The chain crosses the membrane as a helical span at residues 168-186; that stretch reads FPHQVLAGLITGAVLGWLM. Residues 187–197 are Cytoplasmic-facing; the sequence is TPQVPMERELS. The chain crosses the membrane as a helical span at residues 198 to 218; the sequence is FYGLTSLALLLGASLIYWTLF. Over 219-254 the chain is Lumenal; it reads TLGLDLSWSINLASKWCERPEWVHLDSRPFASLSRD. Residues 255–273 form a helical membrane-spanning segment; that stretch reads SGAALGLGIALHSPCYAQV. Topologically, residues 274 to 283 are cytoplasmic; sequence RRAHLGYGQK. The chain crosses the membrane as a helical span at residues 284-304; the sequence is LVCLVLAMGLLGPLNWLGYPP. Residues 305–307 lie on the Lumenal side of the membrane; it reads QIS. The helical transmembrane segment at 308 to 328 threads the bilayer; that stretch reads LFYIFNFLKYTLWPCLVLALV. Residues 329-346 are Cytoplasmic-facing; that stretch reads PWLVHMFSAQEAPPIRSS.

It belongs to the glucose-6-phosphatase family.

It localises to the endoplasmic reticulum membrane. It catalyses the reaction D-glucose 6-phosphate + H2O = D-glucose + phosphate. It functions in the pathway carbohydrate biosynthesis; gluconeogenesis. Inhibited by vanadate. Its function is as follows. Hydrolyzes glucose-6-phosphate to glucose in the endoplasmic reticulum. May form with the glucose-6-phosphate transporter (SLC37A4/G6PT) a ubiquitously expressed complex responsible for glucose production through glycogenolysis and gluconeogenesis. Probably required for normal neutrophil function. In Bos taurus (Bovine), this protein is Glucose-6-phosphatase 3 (G6PC3).